Reading from the N-terminus, the 460-residue chain is Argininosuccinate lyase (460 aa).

It belongs to the lyase 1 family. Argininosuccinate lyase subfamily.

It is found in the cytoplasm. It catalyses the reaction 2-(N(omega)-L-arginino)succinate = fumarate + L-arginine. It participates in amino-acid biosynthesis; L-arginine biosynthesis; L-arginine from L-ornithine and carbamoyl phosphate: step 3/3. This Nitratidesulfovibrio vulgaris (strain ATCC 29579 / DSM 644 / CCUG 34227 / NCIMB 8303 / VKM B-1760 / Hildenborough) (Desulfovibrio vulgaris) protein is Argininosuccinate lyase.